Here is a 681-residue protein sequence, read N- to C-terminus: Macrolide export ATP-binding/permease protein MacB (681 aa).

The ABC transporter domain occupies L6–A244. G42 to S49 serves as a coordination point for ATP. Residues T246 to P273 are compositionally biased toward low complexity. The segment at T246–S298 is disordered. Positions A274–A285 are enriched in pro residues. Helical transmembrane passes span C306–G326, L554–M574, L611–F631, and A644–M664.

The protein belongs to the ABC transporter superfamily. Macrolide exporter (TC 3.A.1.122) family. Homodimer.

Its subcellular location is the cell inner membrane. Functionally, non-canonical ABC transporter that contains transmembrane domains (TMD), which form a pore in the inner membrane, and an ATP-binding domain (NBD), which is responsible for energy generation. Confers resistance against macrolides. This Burkholderia orbicola (strain AU 1054) protein is Macrolide export ATP-binding/permease protein MacB.